A 541-amino-acid chain; its full sequence is Membrane protein insertase YidC (541 aa).

The next 6 membrane-spanning stretches (helical) occupy residues 7–27, 289–309, 356–376, 430–450, 463–483, and 498–518; these read FLIVAIFLSVFLLWDKWGVTH, YLLTVVNPELVIAPGAIVTLP, IIHSWGYSIITLTLLIKLAFY, LPILVQIPVFISLYWVLLEMV, LSAQDPYYILPLIMGVSMFAQ, and IMMALPFVFTIFFLWFPSGLV.

This sequence belongs to the OXA1/ALB3/YidC family. Type 1 subfamily. As to quaternary structure, interacts with the Sec translocase complex via SecD. Specifically interacts with transmembrane segments of nascent integral membrane proteins during membrane integration.

It localises to the cell inner membrane. In terms of biological role, required for the insertion and/or proper folding and/or complex formation of integral membrane proteins into the membrane. Involved in integration of membrane proteins that insert both dependently and independently of the Sec translocase complex, as well as at least some lipoproteins. Aids folding of multispanning membrane proteins. The chain is Membrane protein insertase YidC from Ruthia magnifica subsp. Calyptogena magnifica.